The chain runs to 276 residues: Cytoplasmic envelopment protein 1 (276 aa).

The protein belongs to the herpesviridae cytoplasmic envelopment protein 1 family.

The protein localises to the virion. It localises to the virion tegument. It is found in the host cytoplasm. Its subcellular location is the host Golgi apparatus. Functionally, plays a critical role in cytoplasmic virus egress. Participates in the final step of tegumentation and envelope acquisition within the host cytoplasm. The sequence is that of Cytoplasmic envelopment protein 1 (42) from Equus caballus (Horse).